Here is a 279-residue protein sequence, read N- to C-terminus: 3-methyl-2-oxobutanoate hydroxymethyltransferase (279 aa).

Mg(2+) contacts are provided by Asp43 and Asp82. 3-methyl-2-oxobutanoate contacts are provided by residues Asp43–Ser44, Asp82, and Lys112. Residue Glu114 participates in Mg(2+) binding. Residue Glu181 is the Proton acceptor of the active site.

The protein belongs to the PanB family. Homodecamer; pentamer of dimers. Mg(2+) serves as cofactor.

The protein localises to the cytoplasm. The enzyme catalyses 3-methyl-2-oxobutanoate + (6R)-5,10-methylene-5,6,7,8-tetrahydrofolate + H2O = 2-dehydropantoate + (6S)-5,6,7,8-tetrahydrofolate. Its pathway is cofactor biosynthesis; (R)-pantothenate biosynthesis; (R)-pantoate from 3-methyl-2-oxobutanoate: step 1/2. Catalyzes the reversible reaction in which hydroxymethyl group from 5,10-methylenetetrahydrofolate is transferred onto alpha-ketoisovalerate to form ketopantoate. The chain is 3-methyl-2-oxobutanoate hydroxymethyltransferase from Bacillus anthracis (strain A0248).